A 247-amino-acid polypeptide reads, in one-letter code: Coproheme decarboxylase (247 aa).

Fe-coproporphyrin III is bound by residues arginine 129, 143–147 (YPMDK), histidine 170, glutamine 183, and serine 221. Tyrosine 143 is a catalytic residue.

This sequence belongs to the ChdC family. Type 1 subfamily. The cofactor is Fe-coproporphyrin III.

It carries out the reaction Fe-coproporphyrin III + 2 H2O2 + 2 H(+) = heme b + 2 CO2 + 4 H2O. It catalyses the reaction Fe-coproporphyrin III + H2O2 + H(+) = harderoheme III + CO2 + 2 H2O. The catalysed reaction is harderoheme III + H2O2 + H(+) = heme b + CO2 + 2 H2O. It participates in porphyrin-containing compound metabolism; protoheme biosynthesis. Involved in coproporphyrin-dependent heme b biosynthesis. Catalyzes the decarboxylation of Fe-coproporphyrin III (coproheme) to heme b (protoheme IX), the last step of the pathway. The reaction occurs in a stepwise manner with a three-propionate intermediate. The sequence is that of Coproheme decarboxylase from Bacillus cereus (strain B4264).